The chain runs to 101 residues: DNA-binding protein Fis (101 aa).

Positions 77 to 96 form a DNA-binding region, H-T-H motif; that stretch reads QTRAANMLGINRGTLRKKLK.

This sequence belongs to the transcriptional regulatory Fis family. Homodimer.

In terms of biological role, activates ribosomal RNA transcription. Plays a direct role in upstream activation of rRNA promoters. This Shewanella denitrificans (strain OS217 / ATCC BAA-1090 / DSM 15013) protein is DNA-binding protein Fis.